We begin with the raw amino-acid sequence, 226 residues long: UPF0758 protein GK2618 (226 aa).

The MPN domain occupies 104 to 226 (VIRCPEDGAK…FISLKEKGYV (123 aa)). 3 residues coordinate Zn(2+): His-175, His-177, and Asp-188. The JAMM motif motif lies at 175-188 (HNHPSGDPTPSRED).

It belongs to the UPF0758 family.

The protein is UPF0758 protein GK2618 of Geobacillus kaustophilus (strain HTA426).